The sequence spans 777 residues: CRISPR system single-strand-specific deoxyribonuclease Cas10/Csm1 (subtype III-A) (777 aa).

An HD domain is found at 1-106 (MEIDELTALG…VYEADNLASG (106 aa)). A GGDEF domain is found at 513-660 (RRLGVMKGDV…GRNRVFVVGR (148 aa)).

It belongs to the CRISPR-associated Cas10/Csm1 family. Probably part of the Csm effector complex, that includes Cas10, Csm2, Csm3, Csm4, Csm5 and mature crRNA. Will form a homodimer in solution, interacts with Csm4, which is a tighter, better association than the homodimeric Cas10 and uses the same interface for interaction. A divalent metal cation is required as a cofactor.

With respect to regulation, ssDNase activity is inhibited by EDTA. In terms of biological role, CRISPR (clustered regularly interspaced short palindromic repeat) is an adaptive immune system that provides protection against mobile genetic elements (viruses, transposable elements and conjugative plasmids). CRISPR clusters contain spacers, sequences complementary to antecedent mobile elements, and target invading nucleic acids. CRISPR clusters are transcribed and processed into CRISPR RNA (crRNA). The type III-A Csm effector complex binds crRNA and acts as a crRNA-guided RNase, DNase and cyclic oligoadenylate synthase; binding of target RNA cognate to the crRNA is required for all activities. Functionally, a single-strand deoxyribonuclease (ssDNase) which digests linear and circular ssDNA; has 5'-3' and 3'-5' exonuclease activity as well as a less efficient endonuclease activity. Has a minimal size requirement; 100 nucleotide ssDNA (nt) is more efficiently digested than 50 or 25 nt ssDNA, while 14 nt ssDNA is not cleaved at all. It has no activity on dsDNA or ssRNA. Its function is as follows. ssDNase activity is stimulated in the ternary Csm effector complex; binding of cognate target RNA activates the ssDNase, as the target RNA is degraded ssDNA activity decreases. When associated with the ternary Csm effector complex (the crRNA, Cas proteins and a cognate target ssRNA) synthesizes cyclic oligoadenylates (cOA) from ATP. cOAs are second messengers that stimulate the ssRNase activity of Csm6, inducing an antiviral state important for defense against invading nucleic acids. The polypeptide is CRISPR system single-strand-specific deoxyribonuclease Cas10/Csm1 (subtype III-A) (Thermococcus onnurineus (strain NA1)).